Here is a 323-residue protein sequence, read N- to C-terminus: Lipoyl synthase (323 aa).

7 residues coordinate [4Fe-4S] cluster: C65, C70, C76, C91, C95, C98, and S304. In terms of domain architecture, Radical SAM core spans 77–293; the sequence is FNNGTATFMI…KKEALSIGFT (217 aa).

The protein belongs to the radical SAM superfamily. Lipoyl synthase family. It depends on [4Fe-4S] cluster as a cofactor.

It is found in the cytoplasm. The catalysed reaction is [[Fe-S] cluster scaffold protein carrying a second [4Fe-4S](2+) cluster] + N(6)-octanoyl-L-lysyl-[protein] + 2 oxidized [2Fe-2S]-[ferredoxin] + 2 S-adenosyl-L-methionine + 4 H(+) = [[Fe-S] cluster scaffold protein] + N(6)-[(R)-dihydrolipoyl]-L-lysyl-[protein] + 4 Fe(3+) + 2 hydrogen sulfide + 2 5'-deoxyadenosine + 2 L-methionine + 2 reduced [2Fe-2S]-[ferredoxin]. It functions in the pathway protein modification; protein lipoylation via endogenous pathway; protein N(6)-(lipoyl)lysine from octanoyl-[acyl-carrier-protein]: step 2/2. Catalyzes the radical-mediated insertion of two sulfur atoms into the C-6 and C-8 positions of the octanoyl moiety bound to the lipoyl domains of lipoate-dependent enzymes, thereby converting the octanoylated domains into lipoylated derivatives. This Buchnera aphidicola subsp. Acyrthosiphon pisum (strain 5A) protein is Lipoyl synthase.